A 198-amino-acid polypeptide reads, in one-letter code: Pyridoxal 5'-phosphate synthase subunit PdxT (198 aa).

52 to 54 (GES) serves as a coordination point for L-glutamine. Residue C84 is the Nucleophile of the active site. L-glutamine contacts are provided by residues R115 and 142 to 143 (IR). Residues H178 and E180 each act as charge relay system in the active site.

The protein belongs to the glutaminase PdxT/SNO family. As to quaternary structure, in the presence of PdxS, forms a dodecamer of heterodimers. Only shows activity in the heterodimer.

It carries out the reaction aldehydo-D-ribose 5-phosphate + D-glyceraldehyde 3-phosphate + L-glutamine = pyridoxal 5'-phosphate + L-glutamate + phosphate + 3 H2O + H(+). It catalyses the reaction L-glutamine + H2O = L-glutamate + NH4(+). Its pathway is cofactor biosynthesis; pyridoxal 5'-phosphate biosynthesis. Its function is as follows. Catalyzes the hydrolysis of glutamine to glutamate and ammonia as part of the biosynthesis of pyridoxal 5'-phosphate. The resulting ammonia molecule is channeled to the active site of PdxS. The polypeptide is Pyridoxal 5'-phosphate synthase subunit PdxT (Archaeoglobus fulgidus (strain ATCC 49558 / DSM 4304 / JCM 9628 / NBRC 100126 / VC-16)).